The following is a 374-amino-acid chain: Transcription factor NF-E2 45 kDa subunit (374 aa).

Disordered regions lie at residues 1 to 21 (MSPC…IPEP) and 40 to 61 (LNAP…GPPP). Residues 1–83 (MSPCPPQQSR…PGFPLPAPPY (83 aa)) are required for interaction with MAPK8. The segment at 1–207 (MSPCPPQQSR…PPAETPLALE (207 aa)) is transactivation domain. The segment covering 48 to 61 (FEPPAPVPYPGPPP) has biased composition (pro residues). 2 short sequence motifs (PXY motif) span residues 61 to 65 (PPPSY) and 79 to 83 (PAPPY). The disordered stretch occupies residues 132-165 (LSAGPSKPQEDPESDSGLSLNYSDAESLELEGTE). Position 158 is a phosphoserine; by MAPK8 (Ser-158). The residue at position 171 (Ser-171) is a Phosphoserine; by PKA. The disordered stretch occupies residues 207–227 (EPSSGPVRAKPTARGEAGSRD). The bZIP domain maps to 267 to 330 (LVRDIRRRGK…EVMRQQLTDL (64 aa)). Positions 269–288 (RDIRRRGKNKVAAQNCRKRK) are basic motif. Positions 292-299 (IVQLEREL) are leucine-zipper. A Glycyl lysine isopeptide (Lys-Gly) (interchain with G-Cter in SUMO); alternate cross-link involves residue Lys-369. Residue Lys-369 forms a Glycyl lysine isopeptide (Lys-Gly) (interchain with G-Cter in SUMO1); alternate linkage.

Belongs to the bZIP family. CNC subfamily. Homodimer; can bind DNA as a homodimer. Erythroid transcription activator nuclear factor erythroid-derived 2 (NF-E2), composed of a heterodimer of NFE2 and MAFK, possesses transactivation activity on beta-globin. Also forms high affinity heterodimer with MAFG; the interaction promotes erythropoiesis. Interacts (via the PXY motif 1) with ITCH (via the WW 1 domain); the interaction promotes 'Lys63'-linked ubiquitination of NFE2, translocates it to the cytoplasm and inhibits its transactivation activity. Interacts with KMT2D/MLL2; the interaction promotes transactivation of the beta-globin locus. Interacts with MAPK8 (phosphorylated form); the interaction leads to phosphorylation of NFE2 in undifferentiated cells. In terms of processing, phosphorylated on serine residues. In undifferentiated erythrocytes, phosphorylated by MAPK8 which then leads to ubiquitination and protein degradation. Post-translationally, sumoylated. Sumoylation is required for translocation to nuclear bodies PODs, anchoring to the gene loci, and transactivation of the beta-globin gene. Ubiquitinated mainly by 'Lys63'-linked ubiquitin. Polyubiquitination with 'Lys63'-linked ubiquitin by ITCH retains NFE2 in the cytoplasm preventing its transactivation activity. In undifferentiated erythrocyte, is ubiquitinated after MAPK8-mediatd phosphorylation leading to protein degradation.

The protein resides in the nucleus. Its subcellular location is the cytoplasm. Its function is as follows. Component of the NF-E2 complex essential for regulating erythroid and megakaryocytic maturation and differentiation. Binds to the hypersensitive site 2 (HS2) of the beta-globin control region (LCR). This subunit (NFE2) recognizes the TCAT/C sequence of the AP-1-like core palindrome present in a number of erythroid and megakaryocytic gene promoters. Requires MAFK or other small MAF proteins for binding to the NF-E2 motif. May play a role in all aspects of hemoglobin production from globin and heme synthesis to procurement of iron. This is Transcription factor NF-E2 45 kDa subunit (NFE2) from Bos taurus (Bovine).